The chain runs to 180 residues: UPF0227 protein YcfP (180 aa).

Belongs to the UPF0227 family.

This chain is UPF0227 protein YcfP, found in Salmonella arizonae (strain ATCC BAA-731 / CDC346-86 / RSK2980).